A 309-amino-acid chain; its full sequence is Glutaminase (309 aa).

7 residues coordinate substrate: serine 65, asparagine 117, glutamate 162, asparagine 169, tyrosine 193, tyrosine 245, and valine 263.

This sequence belongs to the glutaminase family. As to quaternary structure, homotetramer.

It catalyses the reaction L-glutamine + H2O = L-glutamate + NH4(+). This is Glutaminase from Bacillus cereus (strain ATCC 10987 / NRS 248).